We begin with the raw amino-acid sequence, 151 residues long: UPF0178 protein Hhal_1913 (151 aa).

It belongs to the UPF0178 family.

In Halorhodospira halophila (strain DSM 244 / SL1) (Ectothiorhodospira halophila (strain DSM 244 / SL1)), this protein is UPF0178 protein Hhal_1913.